A 391-amino-acid polypeptide reads, in one-letter code: Aspartate carbamoyltransferase 3, chloroplastic (391 aa).

The transit peptide at 1–69 (MTASSSLFSC…SKCDKMIKTR (69 aa)) directs the protein to the chloroplast. Positions 137 and 138 each coordinate carbamoyl phosphate. Residues Arg-137 and Thr-138 each coordinate UMP. L-aspartate is bound at residue Lys-167. The carbamoyl phosphate site is built by Arg-188, His-216, and Gln-219. 2 residues coordinate UMP: Arg-188 and His-216. Positions 249 and 311 each coordinate UMP. Residues Arg-249 and Arg-311 each coordinate L-aspartate. Residues Leu-351 and Pro-352 each coordinate carbamoyl phosphate.

This sequence belongs to the aspartate/ornithine carbamoyltransferase superfamily. ATCase family. Homotrimer.

The protein resides in the plastid. It is found in the chloroplast. It carries out the reaction carbamoyl phosphate + L-aspartate = N-carbamoyl-L-aspartate + phosphate + H(+). Its pathway is pyrimidine metabolism; UMP biosynthesis via de novo pathway; (S)-dihydroorotate from bicarbonate: step 2/3. Feedback inhibited by UMP. In terms of biological role, catalyzes the condensation of carbamoyl phosphate and aspartate to form carbamoyl aspartate and inorganic phosphate, the committed step in the de novo pyrimidine nucleotide biosynthesis pathway. The sequence is that of Aspartate carbamoyltransferase 3, chloroplastic (PYRB3) from Pisum sativum (Garden pea).